The primary structure comprises 674 residues: Probable copper-transporting P-type ATPase B (674 aa).

Residues 1–20 (MNHSNHMHHDNHESHHHYSG) are disordered. 6 consecutive transmembrane segments (helical) span residues 32–52 (FFVS…MGVN), 57–77 (FTFP…FFYG), 95–115 (GMMT…LYAF), 127–147 (TMDF…GHWI), 284–304 (GYLF…WMLI), and 315–335 (LVTV…PLVT). Asp-367 serves as the catalytic 4-aspartylphosphate intermediate. The Mg(2+) site is built by Asp-565 and Asp-569. The next 2 helical transmembrane spans lie at 623–645 (LWWG…AFIG) and 649–671 (SPAV…AFTL).

The protein belongs to the cation transport ATPase (P-type) (TC 3.A.3) family. Type IB subfamily.

The protein resides in the cell membrane. The enzyme catalyses Cu(+)(in) + ATP + H2O = Cu(+)(out) + ADP + phosphate + H(+). Involved in copper transport. This Staphylococcus haemolyticus (strain JCSC1435) protein is Probable copper-transporting P-type ATPase B (copB).